Here is a 265-residue protein sequence, read N- to C-terminus: Eukaryotic translation initiation factor 3 subunit J (265 aa).

2 disordered regions span residues methionine 1–leucine 113 and serine 215–threonine 237. Acidic residues predominate over residues aspartate 27–valine 45. A coiled-coil region spans residues serine 43–glutamate 95. The segment covering glutamate 46–alanine 62 has biased composition (basic and acidic residues). Over residues glutamate 86–glutamate 97 the composition is skewed to acidic residues. Composition is skewed to basic and acidic residues over residues alanine 98–leucine 113 and glutamate 217–serine 229.

It belongs to the eIF-3 subunit J family. As to quaternary structure, component of the eukaryotic translation initiation factor 3 (eIF-3) complex.

The protein localises to the cytoplasm. Its function is as follows. Component of the eukaryotic translation initiation factor 3 (eIF-3) complex, which is involved in protein synthesis of a specialized repertoire of mRNAs and, together with other initiation factors, stimulates binding of mRNA and methionyl-tRNAi to the 40S ribosome. The eIF-3 complex specifically targets and initiates translation of a subset of mRNAs involved in cell proliferation. This chain is Eukaryotic translation initiation factor 3 subunit J (hcr1), found in Emericella nidulans (strain FGSC A4 / ATCC 38163 / CBS 112.46 / NRRL 194 / M139) (Aspergillus nidulans).